The following is a 130-amino-acid chain: Small ribosomal subunit protein uS11 (130 aa).

The protein belongs to the universal ribosomal protein uS11 family. Part of the 30S ribosomal subunit. Interacts with proteins S7 and S18. Binds to IF-3.

Functionally, located on the platform of the 30S subunit, it bridges several disparate RNA helices of the 16S rRNA. Forms part of the Shine-Dalgarno cleft in the 70S ribosome. This Campylobacter fetus subsp. fetus (strain 82-40) protein is Small ribosomal subunit protein uS11.